The chain runs to 194 residues: Phosphoheptose isomerase (194 aa).

The 155-residue stretch at 34-188 folds into the SIS domain; sequence LANIFTKGKK…IEGVERIMFP (155 aa). 49-51 is a substrate binding site; it reads NGG. Zn(2+) contacts are provided by His58 and Glu62. Substrate contacts are provided by residues Glu62, 90–91, 116–118, Ser121, and Gln168; these read ND and STS. Residues Gln168 and His176 each coordinate Zn(2+).

The protein belongs to the SIS family. GmhA subfamily. The cofactor is Zn(2+).

It localises to the cytoplasm. The enzyme catalyses 2 D-sedoheptulose 7-phosphate = D-glycero-alpha-D-manno-heptose 7-phosphate + D-glycero-beta-D-manno-heptose 7-phosphate. Its pathway is carbohydrate biosynthesis; D-glycero-D-manno-heptose 7-phosphate biosynthesis; D-glycero-alpha-D-manno-heptose 7-phosphate and D-glycero-beta-D-manno-heptose 7-phosphate from sedoheptulose 7-phosphate: step 1/1. Catalyzes the isomerization of sedoheptulose 7-phosphate in D-glycero-D-manno-heptose 7-phosphate. This chain is Phosphoheptose isomerase, found in Fusobacterium nucleatum subsp. nucleatum (strain ATCC 25586 / DSM 15643 / BCRC 10681 / CIP 101130 / JCM 8532 / KCTC 2640 / LMG 13131 / VPI 4355).